The sequence spans 130 residues: Small ribosomal subunit protein uS9 (130 aa).

It belongs to the universal ribosomal protein uS9 family.

This chain is Small ribosomal subunit protein uS9, found in Cupriavidus necator (strain ATCC 17699 / DSM 428 / KCTC 22496 / NCIMB 10442 / H16 / Stanier 337) (Ralstonia eutropha).